The chain runs to 143 residues: NADH-quinone oxidoreductase subunit A (143 aa).

3 consecutive transmembrane segments (helical) span residues 7 to 27 (GFGN…GGYL), 63 to 83 (FYVV…LYPW), and 93 to 113 (FALF…AYAW).

The protein belongs to the complex I subunit 3 family. NDH-1 is composed of 14 different subunits. Subunits NuoA, H, J, K, L, M, N constitute the membrane sector of the complex.

Its subcellular location is the cell inner membrane. It catalyses the reaction a quinone + NADH + 5 H(+)(in) = a quinol + NAD(+) + 4 H(+)(out). NDH-1 shuttles electrons from NADH, via FMN and iron-sulfur (Fe-S) centers, to quinones in the respiratory chain. The immediate electron acceptor for the enzyme in this species is believed to be a menaquinone. Couples the redox reaction to proton translocation (for every two electrons transferred, four hydrogen ions are translocated across the cytoplasmic membrane), and thus conserves the redox energy in a proton gradient. This Chlorobium limicola (strain DSM 245 / NBRC 103803 / 6330) protein is NADH-quinone oxidoreductase subunit A.